The chain runs to 216 residues: Endoplasmic reticulum vesicle protein 25 (216 aa).

The signal sequence occupies residues 1–21; it reads MMVSLKSSLFFMLALLTVVHA. At 22–184 the chain is on the lumenal side; that stretch reads LNFDIPAKTN…TNESTNERVK (163 aa). Residues 34-150 form the GOLD domain; that stretch reads PFCLREYVGE…LEPVEADIRR (117 aa). A helical transmembrane segment spans residues 185-205; that stretch reads NFAYLTFISLFVLVIWQILYL. At 206-216 the chain is on the cytoplasmic side; sequence RSFFQRKHLIP.

This sequence belongs to the EMP24/GP25L family.

The protein localises to the endoplasmic reticulum membrane. The protein resides in the golgi apparatus membrane. Functionally, constituent of COPII-coated endoplasmic reticulum-derived transport vesicles. Required for efficient transport of a subset of secretory proteins to the Golgi. Facilitates retrograde transport from the Golgi to the endoplasmic reticulum. The polypeptide is Endoplasmic reticulum vesicle protein 25 (erv25) (Schizosaccharomyces pombe (strain 972 / ATCC 24843) (Fission yeast)).